A 152-amino-acid polypeptide reads, in one-letter code: Putative aluminum-activated malate transporter 11 (152 aa).

2 consecutive transmembrane segments (helical) span residues 48 to 68 and 78 to 98; these read VIHAFKVGHSLTLVSLLYFME and AIWAVMTVVAVLLEFFAVEGL.

The protein belongs to the aromatic acid exporter (TC 2.A.85) family.

It is found in the membrane. In terms of biological role, malate transporter. This chain is Putative aluminum-activated malate transporter 11 (ALMT11), found in Arabidopsis thaliana (Mouse-ear cress).